The following is an 883-amino-acid chain: Phosphoenolpyruvate carboxylase (883 aa).

Active-site residues include histidine 138 and lysine 546.

This sequence belongs to the PEPCase type 1 family. Mg(2+) is required as a cofactor.

The catalysed reaction is oxaloacetate + phosphate = phosphoenolpyruvate + hydrogencarbonate. Forms oxaloacetate, a four-carbon dicarboxylic acid source for the tricarboxylic acid cycle. This chain is Phosphoenolpyruvate carboxylase, found in Enterobacter sp. (strain 638).